The primary structure comprises 375 residues: Protein RecA (375 aa).

G88–T95 contributes to the ATP binding site.

It belongs to the RecA family.

Its subcellular location is the cytoplasm. In terms of biological role, can catalyze the hydrolysis of ATP in the presence of single-stranded DNA, the ATP-dependent uptake of single-stranded DNA by duplex DNA, and the ATP-dependent hybridization of homologous single-stranded DNAs. It interacts with LexA causing its activation and leading to its autocatalytic cleavage. The polypeptide is Protein RecA (Rhodopirellula baltica (strain DSM 10527 / NCIMB 13988 / SH1)).